A 372-amino-acid chain; its full sequence is Monocyte differentiation antigen CD14 (372 aa).

The first 17 residues, 1–17 (MKLMLGLLLLPLTLVHA), serve as a signal peptide directing secretion. Intrachain disulfides connect Cys25–Cys38 and Cys36–Cys53. N-linked (GlcNAc...) asparagine glycans are attached at residues Asn39 and Asn46. 11 LRR repeats span residues 57 to 84 (EDVEFYGGGRSLEYLLKRVDTEANLGQY), 85 to 120 (TDIIRSLPLKRLTVRSARVPTQILFGTLRVLGYSGL), 121 to 146 (RELTLENLEVTGTALSPLLDATGPDL), 147 to 174 (NTLSLRNVSWATTDTWLAELQQWLKPGL), 175 to 198 (KVLSIAQAHSLNFSCKQVGVFPAL), 199 to 226 (ATLDLSDNPELGEKGLISALCPHKFPTL), 227 to 253 (QVLALRNAGMETTSGVCSALAAARVPL), 254 to 278 (QALDLSHNSLRDTAGTPSCDWPSQL), 279 to 299 (NSLNLSFTGLEHVPKGLPAKL), 300 to 321 (SVLDLSYNRLDRKPRPEELPEV), and 322 to 346 (GSLSLTGNPFLHSESQSEAYNSGVV). 2 N-linked (GlcNAc...) asparagine glycosylation sites follow: Asn153 and Asn186. 2 disulfides stabilise this stretch: Cys189–Cys219 and Cys243–Cys272. Asn282 carries N-linked (GlcNAc...) asparagine glycosylation. The tract at residues 290 to 372 (HVPKGLPAKL…ALLLGHRLFV (83 aa)) is required for response to bacterial lipopolysaccharide (LPS). Asn342 is lipidated: GPI-anchor amidated asparagine. A propeptide spans 343-372 (SGVVIATALSPGSAGLSGTLALLLGHRLFV) (removed in mature form).

As to quaternary structure, belongs to the lipopolysaccharide (LPS) receptor, a multi-protein complex containing at least CD14, LY96 and TLR4. Interacts with LPS-bound LPB. Interacts with LPAR1. Interacts with the TLR2:TLR6 or TLR2:TLR1 heterodimers; upon interaction with ligands such as diacylated lipopeptides and triacylated lipopeptides, respectively. Interacts with MYO18A. Interacts with FSTL1. Detected in macrophages and peripheral blood monocytes.

It is found in the cell membrane. Its subcellular location is the secreted. The protein localises to the membrane raft. The protein resides in the golgi apparatus. Its function is as follows. Coreceptor for bacterial lipopolysaccharide. In concert with LBP, binds to monomeric lipopolysaccharide and delivers it to the LY96/TLR4 complex, thereby mediating the innate immune response to bacterial lipopolysaccharide (LPS). Acts via MyD88, TIRAP and TRAF6, leading to NF-kappa-B activation, cytokine secretion and the inflammatory response. Acts as a coreceptor for TLR2:TLR6 heterodimer in response to diacylated lipopeptides and for TLR2:TLR1 heterodimer in response to triacylated lipopeptides, these clusters trigger signaling from the cell surface and subsequently are targeted to the Golgi in a lipid-raft dependent pathway. Binds electronegative LDL (LDL(-)) and mediates the cytokine release induced by LDL(-). The protein is Monocyte differentiation antigen CD14 (Cd14) of Rattus norvegicus (Rat).